Here is a 442-residue protein sequence, read N- to C-terminus: tRNA modification GTPase MnmE (442 aa).

(6S)-5-formyl-5,6,7,8-tetrahydrofolate is bound by residues R27, E84, and K124. Residues 221–366 (GLHVVIVGAP…LLDALQAFAE (146 aa)) enclose the TrmE-type G domain. Residues 231-236 (NAGKSS), 250-256 (SEEAGTT), and 275-278 (DTAG) each bind GTP. The Mg(2+) site is built by S235 and T256. K442 contributes to the (6S)-5-formyl-5,6,7,8-tetrahydrofolate binding site.

Belongs to the TRAFAC class TrmE-Era-EngA-EngB-Septin-like GTPase superfamily. TrmE GTPase family. As to quaternary structure, homodimer. Heterotetramer of two MnmE and two MnmG subunits. Requires K(+) as cofactor.

It localises to the cytoplasm. Functionally, exhibits a very high intrinsic GTPase hydrolysis rate. Involved in the addition of a carboxymethylaminomethyl (cmnm) group at the wobble position (U34) of certain tRNAs, forming tRNA-cmnm(5)s(2)U34. In Brucella suis (strain ATCC 23445 / NCTC 10510), this protein is tRNA modification GTPase MnmE.